We begin with the raw amino-acid sequence, 776 residues long: 3-isopropylmalate dehydratase (776 aa).

[4Fe-4S] cluster contacts are provided by Cys-357, Cys-418, and Cys-421. The span at Ser-482–Asp-493 shows a compositional bias: basic and acidic residues. 2 disordered regions span residues Ser-482–Ala-518 and Asp-525–Ala-544. The segment covering Pro-527–Ser-538 has biased composition (polar residues).

It belongs to the aconitase/IPM isomerase family. As to quaternary structure, monomer. [4Fe-4S] cluster serves as cofactor.

The enzyme catalyses (2R,3S)-3-isopropylmalate = (2S)-2-isopropylmalate. It functions in the pathway amino-acid biosynthesis; L-leucine biosynthesis; L-leucine from 3-methyl-2-oxobutanoate: step 2/4. Functionally, catalyzes the isomerization between 2-isopropylmalate and 3-isopropylmalate, via the formation of 2-isopropylmaleate. This Eremothecium gossypii (strain ATCC 10895 / CBS 109.51 / FGSC 9923 / NRRL Y-1056) (Yeast) protein is 3-isopropylmalate dehydratase (LEU1).